The following is a 175-amino-acid chain: Ribosome maturation factor RimM (175 aa).

One can recognise a PRC barrel domain in the interval 96–175 (EGDFYWHDLI…TIEVDWDAGF (80 aa)).

Belongs to the RimM family. As to quaternary structure, binds ribosomal protein uS19.

It localises to the cytoplasm. In terms of biological role, an accessory protein needed during the final step in the assembly of 30S ribosomal subunit, possibly for assembly of the head region. Essential for efficient processing of 16S rRNA. May be needed both before and after RbfA during the maturation of 16S rRNA. It has affinity for free ribosomal 30S subunits but not for 70S ribosomes. The chain is Ribosome maturation factor RimM from Histophilus somni (strain 129Pt) (Haemophilus somnus).